The sequence spans 372 residues: 3-ketodihydrosphingosine reductase TSC10 (372 aa).

Val-64 contributes to the NADP(+) binding site. NADPH-binding residues include Gly-67, Ser-69, Gly-71, Arg-92, Lys-96, Asp-123, and Leu-124. The GXSXG motif lies at 67-71 (GGSQG). Asp-123 lines the NADP(+) pocket. The active-site Proton donor is Ser-205. NADP(+) contacts are provided by Tyr-219, Lys-223, and Ser-254. Tyr-219 serves as the catalytic Proton acceptor. The active-site Lowers pKa of active site Tyr is the Lys-223. Residues 321–341 (LLQIPLAIFMCIFSPVWNAFV) traverse the membrane as a helical segment.

Belongs to the short-chain dehydrogenases/reductases (SDR) family.

Its subcellular location is the endoplasmic reticulum membrane. The catalysed reaction is sphinganine + NADP(+) = 3-oxosphinganine + NADPH + H(+). Its pathway is lipid metabolism; sphingolipid metabolism. In terms of biological role, catalyzes the reduction of 3'-oxosphinganine (3-ketodihydrosphingosine/KDS) to sphinganine (dihydrosphingosine/DHS), the second step of de novo sphingolipid biosynthesis. This is 3-ketodihydrosphingosine reductase TSC10 (TSC10) from Yarrowia lipolytica (strain CLIB 122 / E 150) (Yeast).